The following is a 440-amino-acid chain: MANVIVVGAQWGDEGKGKITDLLSVSADVVVRYQGGINAGHTVCVGEQTFKLHLIPSGILYPETCCVIASGTVVDPKVLLEEIRHLEELGISTKNLFIAETAHVTMPYHRLIDIAEEERRGKNRIGTTGRGIGPTYADKSGRTGFRVLDLMQPEGFREKLEWIVPLKNVLLERLYNLPPLAVDQVAEQYLAYAEQLRPYVIDASLLIDQAVRTHRNILFEGAQGTLLDLDHGTYPYVTSSNPVAGGACVGAGVGPTIIDRVIGVAKAYTTRVGEGPFPTELRDEVGRHLGERGAEFGTTTGRPRRCGWFDAVIGRYAVRINGLDCLAITKLDVLDELESIKVCVAYHCPSKTVEEFPSDANLFGRCEPVYETLPGWKEPTGHCRTLEELPPKARDYLEFLAHQMKTPIALVSVGANREQTIIVEDPIHGPKRGLLGHNGD.

Residues 12-18 (GDEGKGK) and 40-42 (GHT) each bind GTP. Asp-13 (proton acceptor) is an active-site residue. 2 residues coordinate Mg(2+): Asp-13 and Gly-40. Residues 13 to 16 (DEGK), 38 to 41 (NAGH), Thr-128, Arg-142, Gln-223, Thr-238, and Arg-302 each bind IMP. His-41 serves as the catalytic Proton donor. Position 298 to 304 (298 to 304 (TTTGRPR)) interacts with substrate. GTP-binding positions include Arg-304, 330–332 (KLD), and 412–414 (SVG).

The protein belongs to the adenylosuccinate synthetase family. As to quaternary structure, homodimer. Mg(2+) is required as a cofactor.

The protein localises to the cytoplasm. The catalysed reaction is IMP + L-aspartate + GTP = N(6)-(1,2-dicarboxyethyl)-AMP + GDP + phosphate + 2 H(+). It participates in purine metabolism; AMP biosynthesis via de novo pathway; AMP from IMP: step 1/2. In terms of biological role, plays an important role in the de novo pathway of purine nucleotide biosynthesis. Catalyzes the first committed step in the biosynthesis of AMP from IMP. The polypeptide is Adenylosuccinate synthetase (Gloeobacter violaceus (strain ATCC 29082 / PCC 7421)).